A 966-amino-acid chain; its full sequence is Mitogen-activated protein kinase kinase kinase 13 (966 aa).

Disordered stretches follow at residues 1 to 22 and 93 to 112; these read MANF…SESK and SEMA…STSG. Residues 96–112 show a composition bias toward polar residues; it reads AVSQGNSNTVDAESTSG. In terms of domain architecture, Protein kinase spans 168-409; sequence ISELQWLGSG…FRQTLMHLDI (242 aa). Residues 174 to 182 and lysine 195 each bind ATP; that span reads LGSGAQGAV. The active-site Proton acceptor is aspartate 279. Leucine-zipper regions lie at residues 433–454 and 486–507; these read VKKH…DEEL and LSAI…EQAV. Disordered regions lie at residues 534–652, 744–834, 846–873, and 887–906; these read KRKG…SQSH, DIPS…RRQR, STFS…PDEL, and DLLS…SDGL. The segment covering 567 to 581 has biased composition (low complexity); it reads SPLSGSPKMSTSSSK. The span at 582-594 shows a compositional bias: basic residues; it reads SRYRSKPRHRRGN. Polar residues-rich tracts occupy residues 609–629 and 781–795; these read QPAQ…SQYP and FSSC…TSHL. The span at 814 to 827 shows a compositional bias: acidic residues; the sequence is DSSEEEEGEVDSEV. Residues 815–828 are acidic; it reads SSEEEEGEVDSEVE. Residues 846–855 show a composition bias toward polar residues; it reads STFSSENFSV.

The protein belongs to the protein kinase superfamily. STE Ser/Thr protein kinase family. MAP kinase kinase kinase subfamily. As to quaternary structure, homodimer; forms dimers through the leucine-zipper motif. Interacts with the C-terminus of MAPK8IP1 through the kinase catalytic domain. Binds PRDX3. Associates with the IKK complex through the kinase domain. Mg(2+) is required as a cofactor. Autophosphorylated on serine and threonine residues.

The protein localises to the cytoplasm. Its subcellular location is the membrane. It carries out the reaction L-seryl-[protein] + ATP = O-phospho-L-seryl-[protein] + ADP + H(+). It catalyses the reaction L-threonyl-[protein] + ATP = O-phospho-L-threonyl-[protein] + ADP + H(+). Its activity is regulated as follows. Activated by autophosphorylation and homodimerization. Functionally, activates the JUN N-terminal pathway through activation of the MAP kinase kinase MAP2K7. Acts synergistically with PRDX3 to regulate the activation of NF-kappa-B in the cytosol. This activation is kinase-dependent and involves activating the IKK complex, the IKBKB-containing complex that phosphorylates inhibitors of NF-kappa-B. The sequence is that of Mitogen-activated protein kinase kinase kinase 13 from Pongo abelii (Sumatran orangutan).